A 955-amino-acid polypeptide reads, in one-letter code: MSSPAQPPPTRPPVAAPPPSLAAAAPISVQPPPLQPKPPPHPQQPPQAVVSVGVGPPPPTPQHQQQQQGPPGHAPPQQRPRICFNAHCKDPKSDGPRRRGWRLRNGDFAELCDRCYHSFEHGGFCETFHLEVAGWRNCESCGKRLHCGCIVSVHAFVHLDAGGVECVMCARKSHAAMAPSQIWSSSMHMAQNVADRKDNFVKSWRPPAGQFSSQWRQNNMWSMSTMQSDLQQRLAFEFDRPSGSEKLLPGRTFIHAHEKKFDDMHDRSTTPAGMNQIMRERYANGHTQHTTLDPTYAYTLYHREGTNPNLHDHSHHAGENDHLTARKGVTSDPCSSVSTTFKLDSHHPSILKDDPSAVPAGLSSNFSSANGPKDHIRIGPTQQQQQMASSSLQKQFYSHSVIDNDFQAQLRNGRPRMDAKARSQLLPRYWPRITDQELQHLSGDSNSVITPLFEKMLSASDAGRIGRLVLPKKCAEAYFPAISQAEGLPLKVQDATGKEWVFQFRFWPNNNSRMYVLEGVTPCIQSMQLQAGDTVTFSRIDPEGKLVMGFRKATNLSAEQDQPTKPANGVLPPPEANNKVVVPDSSPNAAVPRPIKVNTESKSSSPVEQATACKIDKGALPQKEGPGTSSSSPLPVKRKATSVGPKIKRFHMDSEESMELKITWEEAQELLRPPPKAPSIVVVDGHEFEEYEEPPILGRRTYFVTDQSGENHQWAQCEDCSKWRKLPVDALLPSKWTCSDNKWDSERSSCDSAQEINMEELGEMIPIKPGAAKKTKGKVDTDNIDVSDGLDTLANLAILGEGESLPSQPTTRHPRHRPGCSCIVCIQPPSGKGPKHKQTCTCNVCMTVRRRFRTLMMRREKRQQSEKDSGVPRKREPGQSSEPVPQSGSGAHPTSTSSPHQRADTNGEGPEDMSIDNKRTSSPVKNQIDLNSQPEREDEQSPKSDATRLLRDNPT.

2 stretches are compositionally biased toward pro residues: residues 1–20 (MSSP…PPPS) and 29–45 (VQPP…PQQP). 2 disordered regions span residues 1–81 (MSSP…QRPR) and 325–392 (ARKG…SSSL). A compositionally biased stretch (low complexity) spans 62 to 71 (QHQQQQQGPP). Residues 332–342 (DPCSSVSTTFK) show a composition bias toward polar residues. Residues 343–355 (LDSHHPSILKDDP) are compositionally biased toward basic and acidic residues. The span at 382–392 (QQQQQMASSSL) shows a compositional bias: low complexity. Positions 453–554 (FEKMLSASDA…KLVMGFRKAT (102 aa)) form a DNA-binding region, TF-B3. 2 stretches are compositionally biased toward polar residues: residues 556-565 (LSAEQDQPTK) and 598-608 (NTESKSSSPVE). Residues 556–642 (LSAEQDQPTK…PLPVKRKATS (87 aa)) form a disordered region. Residues 708 to 758 (SGENHQWAQCEDCSKWRKLPVDALLPSKWTCSDNKWDSERSSCDSAQEINM) form a CW-type zinc finger. The Zn(2+) site is built by C717, C720, C738, and C750. The segment at 856–955 (MMRREKRQQS…ATRLLRDNPT (100 aa)) is disordered. Positions 862-877 (RQQSEKDSGVPRKREP) are enriched in basic and acidic residues. 2 stretches are compositionally biased toward polar residues: residues 878-900 (GQSS…SSPH) and 920-933 (TSSP…LNSQ). Residues 939-955 (EQSPKSDATRLLRDNPT) show a composition bias toward basic and acidic residues.

The protein localises to the nucleus. This is B3 domain-containing protein Os07g0563300 from Oryza sativa subsp. japonica (Rice).